A 223-amino-acid polypeptide reads, in one-letter code: Sporulation-specific protein 19 (223 aa).

The signal sequence occupies residues 1 to 20; it reads MKKQILIVAAQSILCSTVFG. Asn198 is lipidated: GPI-anchor amidated asparagine. Positions 199–223 are cleaved as a propeptide — removed in mature form; that stretch reads ASNFLTPTTVALAVLLTILLFIQAY.

In terms of processing, the GPI-anchor is attached to the protein in the endoplasmic reticulum and serves to target the protein to the cell surface. There, the glucosamine-inositol phospholipid moiety is cleaved off and the GPI-modified mannoprotein is covalently attached via its lipidless GPI glycan remnant to the 1,6-beta-glucan of the outer cell wall layer.

Its subcellular location is the secreted. It localises to the cell wall. The protein localises to the membrane. Its function is as follows. Involved in sporulation. Essential for completion of the nuclear division. The polypeptide is Sporulation-specific protein 19 (SPO19) (Saccharomyces cerevisiae (strain ATCC 204508 / S288c) (Baker's yeast)).